The sequence spans 133 residues: Ribosome-binding factor A (133 aa).

Belongs to the RbfA family. As to quaternary structure, monomer. Binds 30S ribosomal subunits, but not 50S ribosomal subunits or 70S ribosomes.

It is found in the cytoplasm. One of several proteins that assist in the late maturation steps of the functional core of the 30S ribosomal subunit. Associates with free 30S ribosomal subunits (but not with 30S subunits that are part of 70S ribosomes or polysomes). Required for efficient processing of 16S rRNA. May interact with the 5'-terminal helix region of 16S rRNA. The sequence is that of Ribosome-binding factor A from Enterobacter sp. (strain 638).